Here is a 252-residue protein sequence, read N- to C-terminus: MFKKLFRQDENILNSELAEDLPIPRHVAIIMDGNGRWAKKRFLPRIAGHKEGMDVVKRVTRYANAIGIDVLTLYAFSTENWKRPTDEVDFLMKLPVEFFDSFVPELIEENVRVNVMGYRENLPNHTMRAVEKAIADTAHCTGLTLNFALNYGGRSEIITAAKEAMKELELEGKSADDLTEEKLNDHLMSSGLGDPDLLIRTSGELRLSNFMLWQLAYSEFYFTDTHWPDFSKEDFLQAIIEYQNRSRRFGGL.

Residue aspartate 32 is part of the active site. Aspartate 32 provides a ligand contact to Mg(2+). Substrate contacts are provided by residues 33 to 36 (GNGR), tryptophan 37, arginine 45, histidine 49, and 77 to 79 (STE). Asparagine 80 functions as the Proton acceptor in the catalytic mechanism. Residues tryptophan 81, arginine 83, arginine 200, and 206–208 (RLS) contribute to the substrate site. A Mg(2+)-binding site is contributed by glutamate 219.

Belongs to the UPP synthase family. Homodimer. The cofactor is Mg(2+).

In terms of biological role, catalyzes the condensation of isopentenyl diphosphate (IPP) with allylic pyrophosphates generating different type of terpenoids. This is Isoprenyl transferase from Listeria monocytogenes serotype 4b (strain F2365).